Reading from the N-terminus, the 241-residue chain is NH(3)-dependent NAD(+) synthetase (241 aa).

29 to 36 (GISGGIDS) serves as a coordination point for ATP. Aspartate 35 is a Mg(2+) binding site. Deamido-NAD(+) is bound at residue arginine 110. Glutamate 135 is a binding site for Mg(2+). Positions 143 and 150 each coordinate deamido-NAD(+). 2 residues coordinate ATP: lysine 159 and serine 181. Position 226 to 227 (226 to 227 (HK)) interacts with deamido-NAD(+).

The protein belongs to the NAD synthetase family. As to quaternary structure, homodimer.

It catalyses the reaction deamido-NAD(+) + NH4(+) + ATP = AMP + diphosphate + NAD(+) + H(+). It functions in the pathway cofactor biosynthesis; NAD(+) biosynthesis; NAD(+) from deamido-NAD(+) (ammonia route): step 1/1. In terms of biological role, catalyzes the ATP-dependent amidation of deamido-NAD to form NAD. Uses ammonia as a nitrogen source. The protein is NH(3)-dependent NAD(+) synthetase of Finegoldia magna (strain ATCC 29328 / DSM 20472 / WAL 2508) (Peptostreptococcus magnus).